The primary structure comprises 956 residues: Calsyntenin-3 (956 aa).

An N-terminal signal peptide occupies residues 1 to 19 (MTLLLLPLLLASLLASCSC). The Extracellular portion of the chain corresponds to 20–847 (NKANKHKPWI…SHRNSMIPSA (828 aa)). Cadherin domains are found at residues 29-145 (IEAE…APVF) and 146-246 (VERL…KPSW). N-linked (GlcNAc...) asparagine glycosylation is found at asparagine 299, asparagine 327, asparagine 347, asparagine 507, and asparagine 740. A helical transmembrane segment spans residues 848–868 (ATLIIVVCVGFLVLMVVLGLV). Residues 869 to 956 (RIHSLHRRVS…RIIETPPHRY (88 aa)) lie on the Cytoplasmic side of the membrane. Positions 917–956 (ACVTGAVGGQQEDEDSSDSEVADSPSSDERRIIETPPHRY) are disordered. Over residues 927–937 (QEDEDSSDSEV) the composition is skewed to acidic residues. The segment covering 943 to 956 (SDERRIIETPPHRY) has biased composition (basic and acidic residues).

It belongs to the calsyntenin family. In terms of assembly, interacts (via cadherin domains) with both alpha and beta isoforms of neurexins (NRXN1, NRXN2 and NRXN3). Directly interacts with APBA2. Forms a tripartite complex with APBA2 and APP. Interacts with low affinity with KLC1. Interacts with SLC23A2/SVCT2. In terms of processing, proteolytically processed under normal cellular conditions. A primary zeta-cleavage generates a large extracellular (soluble) N-terminal domain (sAlc) and a short C-terminal transmembrane fragment (CTF1). A secondary cleavage catalyzed by gamma-secretase within the transmembrane domain releases the beta-Alc-beta chain in the extracellular milieu and produces an intracellular fragment (AlcICD). This processing is strongly suppressed in the tripartite complex formed with APBA2 and APP, which seems to prevent the association with gamma-secretase.

The protein resides in the postsynaptic cell membrane. It is found in the endoplasmic reticulum membrane. Its subcellular location is the golgi apparatus membrane. It localises to the cell projection. The protein localises to the dendrite. In terms of biological role, postsynaptic adhesion molecule that binds to presynaptic neurexins to mediate both excitatory and inhibitory synapse formation. Promotes synapse development by acting as a cell adhesion molecule at the postsynaptic membrane, which associates with both neurexin-alpha and neurexin-beta proteins at the presynaptic membrane. Regulates the balance between excitatory and inhibitory synapses by inhibiting formation of excitatory parallel-fiber synapses and promoting formation of inhibitory synapses in the same neuron. May also be involved in ascorbate (vitamin C) uptake via its interaction with SLC23A2/SVCT2. Complex formation with APBA2 and APP, stabilizes APP metabolism and enhances APBA2-mediated suppression of beta-APP40 secretion, due to the retardation of intracellular APP maturation. In Pongo abelii (Sumatran orangutan), this protein is Calsyntenin-3 (CLSTN3).